A 733-amino-acid polypeptide reads, in one-letter code: Photosystem I P700 chlorophyll a apoprotein A2 (733 aa).

8 consecutive transmembrane segments (helical) span residues 46–69 (IFAS…FHVA), 135–158 (LYNG…LHLQ), 175–199 (LNHH…HVAI), 273–291 (MAHH…GHQY), 330–353 (LHFQ…QHMY), 369–395 (AALY…IFFI), 417–439 (AIIS…LYVH), and 516–534 (FLVH…LILV). The [4Fe-4S] cluster site is built by Cys-558 and Cys-567. 2 helical membrane passes run 574–595 (AFYL…YFHW) and 642–664 (LSVW…MFLI). Residues His-653, Met-661, and Tyr-669 each coordinate chlorophyll a. Trp-670 provides a ligand contact to phylloquinone. Residues 706–726 (LVGLTHFAVGFVLTYAAFVIA) traverse the membrane as a helical segment.

Belongs to the PsaA/PsaB family. The PsaA/B heterodimer binds the P700 chlorophyll special pair and subsequent electron acceptors. PSI consists of a core antenna complex that captures photons, and an electron transfer chain that converts photonic excitation into a charge separation. The eukaryotic PSI reaction center is composed of at least 11 subunits. P700 is a chlorophyll a/chlorophyll a' dimer, A0 is one or more chlorophyll a, A1 is one or both phylloquinones and FX is a shared 4Fe-4S iron-sulfur center. is required as a cofactor.

It localises to the plastid. Its subcellular location is the chloroplast thylakoid membrane. The catalysed reaction is reduced [plastocyanin] + hnu + oxidized [2Fe-2S]-[ferredoxin] = oxidized [plastocyanin] + reduced [2Fe-2S]-[ferredoxin]. Functionally, psaA and PsaB bind P700, the primary electron donor of photosystem I (PSI), as well as the electron acceptors A0, A1 and FX. PSI is a plastocyanin/cytochrome c6-ferredoxin oxidoreductase, converting photonic excitation into a charge separation, which transfers an electron from the donor P700 chlorophyll pair to the spectroscopically characterized acceptors A0, A1, FX, FA and FB in turn. Oxidized P700 is reduced on the lumenal side of the thylakoid membrane by plastocyanin or cytochrome c6. The sequence is that of Photosystem I P700 chlorophyll a apoprotein A2 from Ostreococcus tauri.